Reading from the N-terminus, the 375-residue chain is Alcohol dehydrogenase E chain (375 aa).

N-acetylserine is present on serine 2. Zn(2+) is bound by residues cysteine 47, serine 49, histidine 68, cysteine 98, cysteine 101, cysteine 104, cysteine 112, and cysteine 175. Residues serine 49 and histidine 68 each contribute to the an alcohol site. Serine 49 is an NAD(+) binding site. NAD(+) contacts are provided by residues 200–205, aspartate 224, lysine 229, valine 293, 293–295, phenylalanine 320, and arginine 370; these read GLGGVG and VGV.

The protein belongs to the zinc-containing alcohol dehydrogenase family. Class-I subfamily. In terms of assembly, dimer of identical or non-identical chains of two types (E and S) coded by 2 separate genes at different loci. Requires Zn(2+) as cofactor.

The protein resides in the cytoplasm. The catalysed reaction is a primary alcohol + NAD(+) = an aldehyde + NADH + H(+). It catalyses the reaction a secondary alcohol + NAD(+) = a ketone + NADH + H(+). This is Alcohol dehydrogenase E chain from Equus caballus (Horse).